The following is a 338-amino-acid chain: tRNA N6-adenosine threonylcarbamoyltransferase (338 aa).

Fe cation-binding residues include histidine 110 and histidine 114. Residues 132–136, aspartate 165, glycine 178, and asparagine 274 contribute to the substrate site; that span reads ILSGG. Fe cation is bound at residue aspartate 298.

It belongs to the KAE1 / TsaD family. Requires Fe(2+) as cofactor.

The protein resides in the cytoplasm. It carries out the reaction L-threonylcarbamoyladenylate + adenosine(37) in tRNA = N(6)-L-threonylcarbamoyladenosine(37) in tRNA + AMP + H(+). In terms of biological role, required for the formation of a threonylcarbamoyl group on adenosine at position 37 (t(6)A37) in tRNAs that read codons beginning with adenine. Is involved in the transfer of the threonylcarbamoyl moiety of threonylcarbamoyl-AMP (TC-AMP) to the N6 group of A37, together with TsaE and TsaB. TsaD likely plays a direct catalytic role in this reaction. This Borrelia hermsii (strain HS1 / DAH) protein is tRNA N6-adenosine threonylcarbamoyltransferase.